Consider the following 580-residue polypeptide: Arginine--tRNA ligase (580 aa).

Positions 131 to 141 match the 'HIGH' region motif; sequence ANPTGPMHVGH.

Belongs to the class-I aminoacyl-tRNA synthetase family. In terms of assembly, monomer.

The protein resides in the cytoplasm. It carries out the reaction tRNA(Arg) + L-arginine + ATP = L-arginyl-tRNA(Arg) + AMP + diphosphate. The polypeptide is Arginine--tRNA ligase (Cereibacter sphaeroides (strain KD131 / KCTC 12085) (Rhodobacter sphaeroides)).